A 184-amino-acid polypeptide reads, in one-letter code: UPF0398 protein BAA_1648 (184 aa).

The protein belongs to the UPF0398 family.

The chain is UPF0398 protein BAA_1648 from Bacillus anthracis (strain A0248).